Here is a 418-residue protein sequence, read N- to C-terminus: Thermolabile hemolysin (418 aa).

Residues 1–19 (MMKKTITLLTALLPLASAV) form the signal peptide. Serine 153 functions as the Nucleophile in the catalytic mechanism. Active-site residues include aspartate 390 and histidine 393.

The protein belongs to the 'GDSL' lipolytic enzyme family. There are two forms of LDH. The LDH(S) may be a protein in which 13 residues of the N-terminal of LDH(L) are deleted.

It localises to the secreted. Its function is as follows. Phospholipase hydrolyzing both fatty acid esters of phospholipid, i.e. it hydrolyzes phosphatidylcholine (PC) to lysophosphatidylcholine (LPC) and then LPC to glycerophosphorylcholine (GPC). The chain is Thermolabile hemolysin from Vibrio parahaemolyticus serotype O3:K6 (strain RIMD 2210633).